A 350-amino-acid chain; its full sequence is Probable choline kinase 2 (350 aa).

Residues R73, Q210, and D227 each coordinate ATP.

This sequence belongs to the choline/ethanolamine kinase family.

It carries out the reaction choline + ATP = phosphocholine + ADP + H(+). The protein operates within phospholipid metabolism; phosphatidylcholine biosynthesis; phosphocholine from choline: step 1/1. In terms of biological role, involved in phospholipid biosynthesis. Catalyzes the first step in phosphatidylcholine biosynthesis. The sequence is that of Probable choline kinase 2 from Arabidopsis thaliana (Mouse-ear cress).